The following is a 101-amino-acid chain: Protein Tat (101 aa).

A disordered region spans residues 1 to 20; it reads MEVVDPNLDPWKHPGSQPET. Residues 1–24 form an interaction with human CREBBP region; that stretch reads MEVVDPNLDPWKHPGSQPETPCNK. The tract at residues 1–48 is transactivation; the sequence is MEVVDPNLDPWKHPGSQPETPCNKCYCKKCCFHCQLCFTRKGLGISYG. Zn(2+) contacts are provided by cysteine 22, cysteine 25, and cysteine 27. Residues 22–37 form a cysteine-rich region; the sequence is CNKCYCKKCCFHCQLC. Lysine 28 carries the N6-acetyllysine; by host PCAF modification. Residues cysteine 30, histidine 33, cysteine 34, and cysteine 37 each contribute to the Zn(2+) site. Residues 38–48 are core; the sequence is FTRKGLGISYG. The disordered stretch occupies residues 47–101; the sequence is YGRKKRRQRRRTPQSGEVHQDPVSKQPLSQTRGDPKGPEESKKKVESKTKTDPSD. The segment covering 48-58 has biased composition (basic residues); it reads GRKKRRQRRRT. Residues 49–57 carry the Nuclear localization signal, RNA-binding (TAR), and protein transduction motif; it reads RKKRRQRRR. The tract at residues 49–86 is interaction with the host capping enzyme RNGTT; it reads RKKRRQRRRTPQSGEVHQDPVSKQPLSQTRGDPKGPEE. Lysine 50 and lysine 51 each carry N6-acetyllysine; by host EP300 and GCN5L2. Residues arginine 52 and arginine 53 each carry the asymmetric dimethylarginine; by host PRMT6 modification. A Glycyl lysine isopeptide (Lys-Gly) (interchain with G-Cter in ubiquitin) cross-link involves residue lysine 71. Residues 78–80 carry the Cell attachment site motif; sequence RGD. Positions 79 to 101 are enriched in basic and acidic residues; it reads GDPKGPEESKKKVESKTKTDPSD.

The protein belongs to the lentiviruses Tat family. As to quaternary structure, interacts with host CCNT1. Associates with the P-TEFb complex composed at least of Tat, P-TEFb (CDK9 and CCNT1), TAR RNA, RNA Pol II. Recruits the HATs CREBBP, TAF1/TFIID, EP300, PCAF and GCN5L2. Interacts with host KAT5/Tip60; this interaction targets the latter to degradation. Interacts with the host deacetylase SIRT1. Interacts with host capping enzyme RNGTT; this interaction stimulates RNGTT. Binds to host KDR, and to the host integrins ITGAV/ITGB3 and ITGA5/ITGB1. Interacts with host KPNB1/importin beta-1 without previous binding to KPNA1/importin alpha-1. Interacts with EIF2AK2. Interacts with host nucleosome assembly protein NAP1L1; this interaction may be required for the transport of Tat within the nucleus, since the two proteins interact at the nuclear rim. Interacts with host C1QBP/SF2P32; this interaction involves lysine-acetylated Tat. Interacts with the host chemokine receptors CCR2, CCR3 and CXCR4. Interacts with host DPP4/CD26; this interaction may trigger an anti-proliferative effect. Interacts with host LDLR. Interacts with the host extracellular matrix metalloproteinase MMP1. Interacts with host PRMT6; this interaction mediates Tat's methylation. Interacts with, and is ubiquitinated by MDM2/Hdm2. Interacts with host PSMC3 and HTATIP2. Interacts with STAB1; this interaction may overcome SATB1-mediated repression of IL2 and IL2RA (interleukin) in T cells by binding to the same domain than HDAC1. Interacts (when acetylated) with human CDK13, thereby increasing HIV-1 mRNA splicing and promoting the production of the doubly spliced HIV-1 protein Nef. Interacts with host TBP; this interaction modulates the activity of transcriptional pre-initiation complex. Interacts with host RELA. Interacts with host PLSCR1; this interaction negatively regulates Tat transactivation activity by altering its subcellular distribution. Post-translationally, asymmetrical arginine methylation by host PRMT6 seems to diminish the transactivation capacity of Tat and affects the interaction with host CCNT1. Acetylation by EP300, CREBBP, GCN5L2/GCN5 and PCAF regulates the transactivation activity of Tat. EP300-mediated acetylation of Lys-50 promotes dissociation of Tat from the TAR RNA through the competitive binding to PCAF's bromodomain. In addition, the non-acetylated Tat's N-terminus can also interact with PCAF. PCAF-mediated acetylation of Lys-28 enhances Tat's binding to CCNT1. Lys-50 is deacetylated by SIRT1. In terms of processing, polyubiquitination by host MDM2 does not target Tat to degradation, but activates its transactivation function and fosters interaction with CCNT1 and TAR RNA. Post-translationally, phosphorylated by EIF2AK2 on serine and threonine residues adjacent to the basic region important for TAR RNA binding and function. Phosphorylation of Tat by EIF2AK2 is dependent on the prior activation of EIF2AK2 by dsRNA.

It localises to the host nucleus. The protein localises to the host nucleolus. It is found in the host cytoplasm. Its subcellular location is the secreted. Its function is as follows. Transcriptional activator that increases RNA Pol II processivity, thereby increasing the level of full-length viral transcripts. Recognizes a hairpin structure at the 5'-LTR of the nascent viral mRNAs referred to as the transactivation responsive RNA element (TAR) and recruits the cyclin T1-CDK9 complex (P-TEFb complex) that will in turn hyperphosphorylate the RNA polymerase II to allow efficient elongation. The CDK9 component of P-TEFb and other Tat-activated kinases hyperphosphorylate the C-terminus of RNA Pol II that becomes stabilized and much more processive. Other factors such as HTATSF1/Tat-SF1, SUPT5H/SPT5, and HTATIP2 are also important for Tat's function. Besides its effect on RNA Pol II processivity, Tat induces chromatin remodeling of proviral genes by recruiting the histone acetyltransferases (HATs) CREBBP, EP300 and PCAF to the chromatin. This also contributes to the increase in proviral transcription rate, especially when the provirus integrates in transcriptionally silent region of the host genome. To ensure maximal activation of the LTR, Tat mediates nuclear translocation of NF-kappa-B by interacting with host RELA. Through its interaction with host TBP, Tat may also modulate transcription initiation. Tat can reactivate a latently infected cell by penetrating in it and transactivating its LTR promoter. In the cytoplasm, Tat is thought to act as a translational activator of HIV-1 mRNAs. In terms of biological role, extracellular circulating Tat can be endocytosed by surrounding uninfected cells via the binding to several surface receptors such as CD26, CXCR4, heparan sulfate proteoglycans (HSPG) or LDLR. Neurons are rarely infected, but they internalize Tat via their LDLR. Through its interaction with nuclear HATs, Tat is potentially able to control the acetylation-dependent cellular gene expression. Modulates the expression of many cellular genes involved in cell survival, proliferation or in coding for cytokines or cytokine receptors. Tat plays a role in T-cell and neurons apoptosis. Tat induced neurotoxicity and apoptosis probably contribute to neuroAIDS. Circulating Tat also acts as a chemokine-like and/or growth factor-like molecule that binds to specific receptors on the surface of the cells, affecting many cellular pathways. In the vascular system, Tat binds to ITGAV/ITGB3 and ITGA5/ITGB1 integrins dimers at the surface of endothelial cells and competes with bFGF for heparin-binding sites, leading to an excess of soluble bFGF. The chain is Protein Tat from Homo sapiens (Human).